The sequence spans 185 residues: Large ribosomal subunit protein uL5 (185 aa).

The protein belongs to the universal ribosomal protein uL5 family. As to quaternary structure, part of the 50S ribosomal subunit; part of the 5S rRNA/L5/L18/L25 subcomplex. Contacts the 5S rRNA and the P site tRNA. Forms a bridge to the 30S subunit in the 70S ribosome.

In terms of biological role, this is one of the proteins that bind and probably mediate the attachment of the 5S RNA into the large ribosomal subunit, where it forms part of the central protuberance. In the 70S ribosome it contacts protein S13 of the 30S subunit (bridge B1b), connecting the 2 subunits; this bridge is implicated in subunit movement. Contacts the P site tRNA; the 5S rRNA and some of its associated proteins might help stabilize positioning of ribosome-bound tRNAs. In Bacteroides fragilis (strain ATCC 25285 / DSM 2151 / CCUG 4856 / JCM 11019 / LMG 10263 / NCTC 9343 / Onslow / VPI 2553 / EN-2), this protein is Large ribosomal subunit protein uL5.